The sequence spans 302 residues: Nucleotide-binding protein Bcep1808_2900 (302 aa).

Residue 8–15 (GISGSGKS) participates in ATP binding. 57 to 60 (DARS) lines the GTP pocket.

The protein belongs to the RapZ-like family.

In terms of biological role, displays ATPase and GTPase activities. This chain is Nucleotide-binding protein Bcep1808_2900, found in Burkholderia vietnamiensis (strain G4 / LMG 22486) (Burkholderia cepacia (strain R1808)).